We begin with the raw amino-acid sequence, 388 residues long: Gastricsin (388 aa).

A signal peptide spans 1-16 (MKWMVVVLVCLQLLEA). A propeptide spans 17–59 (AVVKVPLKKFKSIRETMKEKGLLGEFLRTHKYDPAWKYRFGDL) (activation peptide). Positions 73 to 385 (YFGEISIGTP…DLGNNRVGFA (313 aa)) constitute a Peptidase A1 domain. The active site involves D91. 2 disulfide bridges follow: C104–C109 and C267–C271. Residue D276 is part of the active site. A disulfide bridge connects residues C310 and C343.

The protein belongs to the peptidase A1 family.

The protein localises to the secreted. The catalysed reaction is More restricted specificity than pepsin A, but shows preferential cleavage at Tyr-|-Xaa bonds. High activity on hemoglobin.. Functionally, hydrolyzes a variety of proteins. This Homo sapiens (Human) protein is Gastricsin (PGC).